A 423-amino-acid chain; its full sequence is Keratin, type I cytoskeletal 18 (423 aa).

Serine 2 carries the post-translational modification N-acetylserine. The tract at residues 2 to 71 (SFTTRSTTFS…GLAGMGGIQT (70 aa)) is head. Residues serine 7, serine 11, serine 16, and serine 19 each carry the phosphoserine modification. Phosphoserine; alternate occurs at positions 31 and 32. Serine 31 and serine 32 each carry an O-linked (GlcNAc) serine; alternate glycan. Serine 35 is subject to Phosphoserine. Tyrosine 37 carries the post-translational modification Phosphotyrosine. Serine 43 is subject to Phosphoserine. Arginine 46 carries the omega-N-methylarginine modification. Residue serine 50 is modified to Phosphoserine; alternate. O-linked (GlcNAc) serine; alternate glycosylation occurs at serine 50. At serine 52 the chain carries Phosphoserine; by MAPKAPK2 and MAPKAPK3. Serine 57 and serine 60 each carry phosphoserine. A necessary for interaction with PNN region spans residues 62–366 (GLAGMGGIQT…EALLNIKVKL (305 aa)). Residues 69–121 (IQTEKETMQDLNDRLASYLDKVKSLETENRRLESKIREHLEKKGPQGVRDWGH) are interaction with TRADD. The segment at 72–107 (EKETMQDLNDRLASYLDKVKSLETENRRLESKIREH) is coil 1A. The 313-residue stretch at 72-384 (EKETMQDLND…RLLEDGEDFS (313 aa)) folds into the IF rod domain. Residue lysine 73 forms a Glycyl lysine isopeptide (Lys-Gly) (interchain with G-Cter in SUMO2) linkage. Phosphoserine is present on residues serine 85 and serine 92. Residues 108-125 (LEKKGPQGVRDWGHYFKI) are linker 1. At lysine 124 the chain carries N6-acetyllysine. The interval 126 to 217 (IEDLRAQIFA…KNHEEEVQGL (92 aa)) is coil 1B. 2 positions are modified to phosphoserine: serine 137 and serine 170. Residues 218–241 (EAQIASSGLTVEVDAPKSQDLSKI) are linker 12. The interaction with DNAJB6 stretch occupies residues 236 to 384 (QDLSKIMADI…RLLEDGEDFS (149 aa)). A Glycyl lysine isopeptide (Lys-Gly) (interchain with G-Cter in SUMO2) cross-link involves residue lysine 240. The interval 242-380 (MADIRAQYEA…ATYRRLLEDG (139 aa)) is coil 2. Threonine 295 bears the Phosphothreonine mark. Serine 316 is subject to Phosphoserine. Glycyl lysine isopeptide (Lys-Gly) (interchain with G-Cter in SUMO2) cross-links involve residues lysine 363 and lysine 365. Residues 381–423 (EDFSLNDALDSSNSMQTVQKTTTRKIVDGRVVSETNDTRVLRH) form a tail region. 4 positions are modified to phosphoserine: serine 384, serine 391, serine 392, and serine 394. Threonine 397 carries the phosphothreonine modification.

The protein belongs to the intermediate filament family. As to quaternary structure, heterotetramer of two type I and two type II keratins. KRT18 associates with KRT8. Interacts with PLEC isoform 1C, when in a heterodimer with KRT8. Interacts with PNN and mutated CFTR. Interacts with YWHAE, YWHAH and YWHAZ only when phosphorylated. Interacts with the thrombin-antithrombin complex. Interacts with DNAJB6, TCHP and TRADD. Interacts with FAM83H. Interacts with EPPK1. Interacts with PKP1 and PKP2. In terms of processing, phosphorylation increases by IL-6. Proteolytically cleaved by caspases during epithelial cell apoptosis. Cleavage occurs at Asp-231 by either caspase-3, caspas-6 or caspase-7. Post-translationally, O-GlcNAcylation increases solubility, and decreases stability by inducing proteasomal degradation. In terms of tissue distribution, expressed in endoderm, intestinal epithelial cells and in most extraembryonic tissues.

The protein resides in the nucleus matrix. The protein localises to the cytoplasm. It is found in the perinuclear region. Its subcellular location is the nucleus. It localises to the nucleolus. Its function is as follows. When phosphorylated, plays a role in filament reorganization. Involved in the delivery of mutated CFTR to the plasma membrane. Involved in the uptake of thrombin-antithrombin complexes by hepatic cells. Together with KRT8, is involved in interleukin-6 (IL-6)-mediated barrier protection. The chain is Keratin, type I cytoskeletal 18 (Krt18) from Mus musculus (Mouse).